A 1372-amino-acid polypeptide reads, in one-letter code: MSVVNFYGQLSNTQQFDQIRINIASPDQVRSWSFGEVTKPETINYRTFKPEKDGLFCARIFGPVKDYECLCGKYKRMKNRGITCEKCGVEVTVSRVRRERMGHIELAAPVAHIWFLKSLPSRISTLLDMTMRDVEKILYFENYVVVDPGLSILQKGELLTEEELQKAKDKYGEDAFTASIGAEVIQQMLKELDFSKLKQELYDELHITSSEVKKKKLVKRLKLVEDFLESENKPEWMIMDVLPVIPPEIRPLVMLDGGRFATSDLNELYRRVINRNNRLKKLIESKAPDIIVRNEKRMLQEAVDALFDNGRRGRAAKNANKRPFKSLSDMLKGKQGRFRQNLLGKRVDYSGRSVIVVGPELKLHQCGLPKKMALELFKPFIYSKLELYGIATTIKAAKRMVEAEKPEVWDVLEEVIREHPVLLNRAPTLHRLGIQAFEPLLIEGKAIQLHPLVCAAFNADFDGDQMAVHIPLSIEAQLEARVFMMSTNNILSPANGRPIIVPDKDIVLGLYYLTIAFDNEVGEGMMFSDLAEMEHALYNKFITIHTKIKYRRDQLNAEGKMVPVIIDTTYGRLMVGELLPSNPNIEFKFINKQLTKKDISLVIDLVYRHCGQKATVIFADQLMKLGFKYACSSGISFGMDDMVVPESKSTHINETQLEIKEFEQQYSNGLITYGEKYNKVVDAWSRCTDRVANDMMKEIATPPVNDYPNHQKINAIYMMAISGARGSFQQIKQLGGMRGLMTKSNGQIIQTPIISNFKEGLTEFECFNSANGMRKGQIDTALKTASSGYLTRKLVDVAQDCIITEKDCGTDKGIEVKSVIEGGEIIVPLAEKILGRTAAIDIFHPVTNDLILNKGELINESKLEQIESAGLDRIMIKSVLTCESSTGICSICYGRDLATGTLVSEGEAIGVIAAQSIGEPGTQLTMRTFHIGGAATKGAEVSSVEASYDAKVKIISRNVVINSEERKIVMSRNCELLLLDNNGNEKARHKIPYGARLLVDDGDMVIKTQKLAEWDPYTIPIITEKSGKVLFKDMVEGISIRDVTDEATGIPSKVIIESKQYSRGAELRPRIQLLDSKGEVITLSNGLEARYYLPVGAVLSVEDGIQISVGDIIARIPKESTTTKDITGGLPRVAELVEARRPKDHAVIAEVDGRVEFGKDYKSKRRIIIHPIDGTMSIEYMVPKGKHVVVNEGDFVKKGDLLIDGNPVLQDILKVMGVEVLANYIVKEVQAVYRLQGVKIDDKHIEVIIRQMLQKVEVTDSGGTTLLVGEKIDRHEFDEINAKAMKNGLKPAEAQLILQGITKASLQTRSFISAASFQETTRVLTEAAIAGKVDKLRGLKENVIVGRLVPAGTGYFMDKMRKAAVKLDEENV.

Residues Cys-69, Cys-71, Cys-84, and Cys-87 each contribute to the Zn(2+) site. Residues Asp-460, Asp-462, and Asp-464 each contribute to the Mg(2+) site. Zn(2+) contacts are provided by Cys-808, Cys-882, Cys-889, and Cys-892.

This sequence belongs to the RNA polymerase beta' chain family. As to quaternary structure, the RNAP catalytic core consists of 2 alpha, 1 beta, 1 beta' and 1 omega subunit. When a sigma factor is associated with the core the holoenzyme is formed, which can initiate transcription. The cofactor is Mg(2+). It depends on Zn(2+) as a cofactor.

It carries out the reaction RNA(n) + a ribonucleoside 5'-triphosphate = RNA(n+1) + diphosphate. Functionally, DNA-dependent RNA polymerase catalyzes the transcription of DNA into RNA using the four ribonucleoside triphosphates as substrates. This chain is DNA-directed RNA polymerase subunit beta', found in Rickettsia prowazekii (strain Madrid E).